The sequence spans 190 residues: Endoribonuclease YbeY (190 aa).

Zn(2+) is bound by residues His147, His151, and His157.

It belongs to the endoribonuclease YbeY family. The cofactor is Zn(2+).

It localises to the cytoplasm. In terms of biological role, single strand-specific metallo-endoribonuclease involved in late-stage 70S ribosome quality control and in maturation of the 3' terminus of the 16S rRNA. The chain is Endoribonuclease YbeY from Nitrobacter winogradskyi (strain ATCC 25391 / DSM 10237 / CIP 104748 / NCIMB 11846 / Nb-255).